Consider the following 321-residue polypeptide: MATH domain and coiled-coil domain-containing protein At3g58410 (321 aa).

The 123-residue stretch at 6–128 (GKKFAWVIKN…NGELMIVAEV (123 aa)) folds into the MATH domain. The stretch at 255–310 (KVDWLEKKLDQVRDKKEKERSCLAKLQETEETLLKLKQKCTELDALMDTEKAELSA) forms a coiled coil.

In Arabidopsis thaliana (Mouse-ear cress), this protein is MATH domain and coiled-coil domain-containing protein At3g58410.